The following is a 188-amino-acid chain: Elongation factor P (188 aa).

N6-(3,6-diaminohexanoyl)-5-hydroxylysine is present on K34.

It belongs to the elongation factor P family. Post-translationally, may be beta-lysylated on the epsilon-amino group of Lys-34 by the combined action of EpmA and EpmB, and then hydroxylated on the C5 position of the same residue by EpmC (if this protein is present). Lysylation is critical for the stimulatory effect of EF-P on peptide-bond formation. The lysylation moiety may extend toward the peptidyltransferase center and stabilize the terminal 3-CCA end of the tRNA. Hydroxylation of the C5 position on Lys-34 may allow additional potential stabilizing hydrogen-bond interactions with the P-tRNA.

The protein localises to the cytoplasm. It functions in the pathway protein biosynthesis; polypeptide chain elongation. Involved in peptide bond synthesis. Alleviates ribosome stalling that occurs when 3 or more consecutive Pro residues or the sequence PPG is present in a protein, possibly by augmenting the peptidyl transferase activity of the ribosome. Modification of Lys-34 is required for alleviation. The protein is Elongation factor P of Sodalis glossinidius (strain morsitans).